A 160-amino-acid polypeptide reads, in one-letter code: Protein CrtK (160 aa).

5 helical membrane passes run 3–23 (LTLF…GAIF), 37–57 (WVPP…LMSI), 76–96 (LAFW…FFGL), 101–121 (GGML…VLFW), and 129–149 (LMFV…FSVW).

Belongs to the TspO/BZRP family.

The protein resides in the cell inner membrane. The protein operates within carotenoid biosynthesis; spheroidene biosynthesis. The protein is Protein CrtK (crtK) of Rhodobacter capsulatus (strain ATCC BAA-309 / NBRC 16581 / SB1003).